The sequence spans 140 residues: Gastrula zinc finger protein XlCGF49.1 (140 aa).

C2H2-type zinc fingers lie at residues 6–28, 34–56, 62–84, 90–112, and 118–140; these read FTCM…YKIH, FTCM…YKMH, FSCS…QKIH, YACT…WKIH, and FSCT…QKMH.

Belongs to the krueppel C2H2-type zinc-finger protein family.

It localises to the nucleus. Its function is as follows. May be involved in transcriptional regulation. The chain is Gastrula zinc finger protein XlCGF49.1 from Xenopus laevis (African clawed frog).